Reading from the N-terminus, the 174-residue chain is D(1B) dopamine receptor (174 aa).

A helical membrane pass occupies residues 1-10 (SILNLCIISV). Topologically, residues 11-32 (DRYWAISRPFCYERKMTQRVAL) are cytoplasmic. A helical transmembrane segment spans residues 33–54 (VMVGLAWTLSILISFIPVQLHW). Residues 55–96 (HRDKVGSRDGLDPPSNLANGTPWEEAGESDRSAENCDSSLNR) are Extracellular-facing. The disordered stretch occupies residues 64 to 88 (GLDPPSNLANGTPWEEAGESDRSAE). Asn95 is a glycosylation site (N-linked (GlcNAc...) asparagine). Residues 97 to 119 (TYAISSSLISFYIPVAIMIVTYT) form a helical membrane-spanning segment. Over 120–169 (RIYRIAQVQIRRISSLERAAEHAQSCRSREACAPDSGLRASIKKETKVLK) the chain is Cytoplasmic. Residues 170-174 (TLSVI) form a helical membrane-spanning segment.

Belongs to the G-protein coupled receptor 1 family.

The protein localises to the cell membrane. Dopamine receptor whose activity is mediated by G proteins which activate adenylyl cyclase. The sequence is that of D(1B) dopamine receptor (DRD5) from Bos taurus (Bovine).